A 103-amino-acid chain; its full sequence is Mitochondrial import inner membrane translocase subunit Tim10 B (103 aa).

The Twin CX3C motif motif lies at 28 to 52 (CFQRCVPSLHHRALDAEEEACLHSC). 2 disulfides stabilise this stretch: Cys-28/Cys-52 and Cys-32/Cys-48.

The protein belongs to the small Tim family. Component of the TIM22 complex, which core is composed of TIMM22, associated with TIMM10 (TIMM10A and/or TIMM10B), TIMM9, AGK and TIMM29. In terms of tissue distribution, ubiquitous, with highest expression in heart, kidney, liver and skeletal muscle.

Its subcellular location is the mitochondrion inner membrane. Functionally, component of the TIM22 complex, a complex that mediates the import and insertion of multi-pass transmembrane proteins into the mitochondrial inner membrane. The TIM22 complex forms a twin-pore translocase that uses the membrane potential as the external driving force. In the TIM22 complex, it may act as a docking point for the soluble 70 kDa complex that guides the target proteins in transit through the aqueous mitochondrial intermembrane space. This chain is Mitochondrial import inner membrane translocase subunit Tim10 B (TIMM10B), found in Homo sapiens (Human).